A 317-amino-acid polypeptide reads, in one-letter code: Retinol dehydrogenase 16 (317 aa).

An NAD(+)-binding site is contributed by 33 to 57 (FITGCDSGFGTLLARQLDRRGMRVL). Y176 functions as the Proton acceptor in the catalytic mechanism. A helical membrane pass occupies residues 289 to 309 (LFYLPLSYLPTFLVDALLYWT).

It belongs to the short-chain dehydrogenases/reductases (SDR) family. Homodimer. In terms of processing, not glycosylated.

The protein resides in the endoplasmic reticulum membrane. Its subcellular location is the microsome membrane. It catalyses the reaction all-trans-retinol--[retinol-binding protein] + NAD(+) = all-trans-retinal--[retinol-binding protein] + NADH + H(+). The enzyme catalyses 9-cis-retinol + NAD(+) = 9-cis-retinal + NADH + H(+). It carries out the reaction 11-cis-retinol + NAD(+) = 11-cis-retinal + NADH + H(+). The catalysed reaction is 13-cis-retinol + NAD(+) = 13-cis-retinal + NADH + H(+). It catalyses the reaction androsterone + NAD(+) = 5alpha-androstan-3,17-dione + NADH + H(+). The enzyme catalyses 5alpha-androstane-3alpha,17beta-diol + NAD(+) = 17beta-hydroxy-5alpha-androstan-3-one + NADH + H(+). The protein operates within cofactor metabolism; retinol metabolism. Functionally, oxidoreductase with a preference for NAD. Oxidizes all-trans-retinol, 9-cis-retinol, 11-cis-retinol and 13-cis-retinol to the corresponding aldehydes. Has higher activity towards CRBP-bound retinol than with free retinol. Oxidizes 3-alpha-hydroxysteroids. Oxidizes androstanediol and androsterone to dihydrotestosterone and androstanedione. Can also catalyze the reverse reaction. The sequence is that of Retinol dehydrogenase 16 from Mus musculus (Mouse).